The sequence spans 107 residues: Colipase (107 aa).

Residues 1–17 (MEKVLVLLLVALSVAYA) form the signal peptide. Positions 18–22 (APGPR) are cleaved as a propeptide — enterostatin, activation peptide. 5 cysteine pairs are disulfide-bonded: Cys34–Cys45, Cys40–Cys56, Cys44–Cys78, Cys66–Cys86, and Cys80–Cys104.

It belongs to the colipase family. In terms of assembly, forms a 1:1 stoichiometric complex with pancreatic lipase. Expressed by the pancreas.

It is found in the secreted. Its function is as follows. Colipase is a cofactor of pancreatic lipase. It allows the lipase to anchor itself to the lipid-water interface. Without colipase the enzyme is washed off by bile salts, which have an inhibitory effect on the lipase. In terms of biological role, enterostatin has a biological activity as a satiety signal. This chain is Colipase (CLPS), found in Oryctolagus cuniculus (Rabbit).